The chain runs to 282 residues: ATP phosphoribosyltransferase (282 aa).

Belongs to the ATP phosphoribosyltransferase family. Long subfamily. Mg(2+) serves as cofactor.

Its subcellular location is the cytoplasm. It catalyses the reaction 1-(5-phospho-beta-D-ribosyl)-ATP + diphosphate = 5-phospho-alpha-D-ribose 1-diphosphate + ATP. Its pathway is amino-acid biosynthesis; L-histidine biosynthesis; L-histidine from 5-phospho-alpha-D-ribose 1-diphosphate: step 1/9. Feedback inhibited by histidine. Its function is as follows. Catalyzes the condensation of ATP and 5-phosphoribose 1-diphosphate to form N'-(5'-phosphoribosyl)-ATP (PR-ATP). Has a crucial role in the pathway because the rate of histidine biosynthesis seems to be controlled primarily by regulation of HisG enzymatic activity. In Pyrobaculum islandicum (strain DSM 4184 / JCM 9189 / GEO3), this protein is ATP phosphoribosyltransferase.